The chain runs to 202 residues: Small ribosomal subunit protein uS4c (202 aa).

Residues 1-13 (MSRYRGPRMKMIR) show a composition bias toward basic residues. Positions 1–41 (MSRYRGPRMKMIRRPGTLPGLTSKTPGTKVGSSDRSTSSKK) are disordered. Positions 29 to 41 (KVGSSDRSTSSKK) are enriched in low complexity. Positions 90 to 153 (MRLDNTIFRL…KCRLVDRRDM (64 aa)) constitute an S4 RNA-binding domain.

This sequence belongs to the universal ribosomal protein uS4 family. Part of the 30S ribosomal subunit. Contacts protein S5. The interaction surface between S4 and S5 is involved in control of translational fidelity.

It localises to the plastid. One of the primary rRNA binding proteins, it binds directly to 16S rRNA where it nucleates assembly of the body of the 30S subunit. In terms of biological role, with S5 and S12 plays an important role in translational accuracy. This is Small ribosomal subunit protein uS4c (rps4) from Aneura mirabilis (Parasitic liverwort).